The chain runs to 158 residues: NAD(P)H-quinone oxidoreductase subunit N (158 aa).

This sequence belongs to the complex I NdhN subunit family. In terms of assembly, NDH-1 can be composed of about 15 different subunits; different subcomplexes with different compositions have been identified which probably have different functions.

It localises to the cellular thylakoid membrane. The enzyme catalyses a plastoquinone + NADH + (n+1) H(+)(in) = a plastoquinol + NAD(+) + n H(+)(out). The catalysed reaction is a plastoquinone + NADPH + (n+1) H(+)(in) = a plastoquinol + NADP(+) + n H(+)(out). Its function is as follows. NDH-1 shuttles electrons from an unknown electron donor, via FMN and iron-sulfur (Fe-S) centers, to quinones in the respiratory and/or the photosynthetic chain. The immediate electron acceptor for the enzyme in this species is believed to be plastoquinone. Couples the redox reaction to proton translocation, and thus conserves the redox energy in a proton gradient. Cyanobacterial NDH-1 also plays a role in inorganic carbon-concentration. This Prochlorococcus marinus (strain MIT 9301) protein is NAD(P)H-quinone oxidoreductase subunit N.